A 568-amino-acid polypeptide reads, in one-letter code: MRVSQFFLSTLKEAPAEAELASHRLMLRAGLIKRLGSGLYTWMPLGLRILHKIEHIIREEMNSSGALELLMPAVHPAELWQESGRWDVFGPQMLKIQDRHQHDFCFGPTHEEVIVDIARREIKSYRQLPINFYQIQTKFRDEIRPRFGVMRAREFIMKDAYSFHADLGSLEQTYQLMHETYSRIFTRIGLKFRAVAADTGAIGGSGSHEFHVLADSGEDAIAFCPDSDYAANIELAEAISHGILRKDPAGVMKKIATPDRKSCSDVAEFLSVPIEQTLKTLAVIADGRFYLLLLRGDHQLNETKTRKIPFLSNFEFADESRIIAKTGCLPGYLGPIGVKTEIIADRAVLEMSNFVCGANEEGYHLTQVNFERDLPLPVQVFDIRNVVTGDPSPDGKGMLEICRGIEVGHIFQLRTKYSEKMKATYLDESGQTQILEMGCYGIGVSRIVAAAIEQNCDERGIIFPVAIAPFQLSIIPIGYHKNLQIQAEVEKLYRACRAAGIEVLLDDREERPGVMFADQELIGIPHRIVIGERNLRDGMVEYQGRLDKTSRLLSLQEVIPVIREICGG.

This sequence belongs to the class-II aminoacyl-tRNA synthetase family. ProS type 1 subfamily. As to quaternary structure, homodimer.

It localises to the cytoplasm. It catalyses the reaction tRNA(Pro) + L-proline + ATP = L-prolyl-tRNA(Pro) + AMP + diphosphate. Functionally, catalyzes the attachment of proline to tRNA(Pro) in a two-step reaction: proline is first activated by ATP to form Pro-AMP and then transferred to the acceptor end of tRNA(Pro). As ProRS can inadvertently accommodate and process non-cognate amino acids such as alanine and cysteine, to avoid such errors it has two additional distinct editing activities against alanine. One activity is designated as 'pretransfer' editing and involves the tRNA(Pro)-independent hydrolysis of activated Ala-AMP. The other activity is designated 'posttransfer' editing and involves deacylation of mischarged Ala-tRNA(Pro). The misacylated Cys-tRNA(Pro) is not edited by ProRS. The sequence is that of Proline--tRNA ligase from Nitrosomonas eutropha (strain DSM 101675 / C91 / Nm57).